The sequence spans 301 residues: Probable alpha-L-glutamate ligase (301 aa).

An ATP-grasp domain is found at 104-287 (LQLLSRRGIG…VAGMIIEHLE (184 aa)). Residues K141, 178–179 (EY), D187, and 211–213 (RSN) each bind ATP. Residues D248, E260, and N262 each coordinate Mg(2+). Mn(2+) is bound by residues D248, E260, and N262.

It belongs to the RimK family. It depends on Mg(2+) as a cofactor. The cofactor is Mn(2+).

The chain is Probable alpha-L-glutamate ligase from Pseudomonas putida (strain W619).